Consider the following 397-residue polypeptide: Anhydro-N-acetylmuramic acid kinase (397 aa).

An ATP-binding site is contributed by 21–28; sequence GTSLDGVD. The span at 373–384 shows a compositional bias: polar residues; sequence TPTNLPSVTGAS. The disordered stretch occupies residues 373–397; that stretch reads TPTNLPSVTGASARTPLGSLSVPGP.

The protein belongs to the anhydro-N-acetylmuramic acid kinase family.

It carries out the reaction 1,6-anhydro-N-acetyl-beta-muramate + ATP + H2O = N-acetyl-D-muramate 6-phosphate + ADP + H(+). It functions in the pathway amino-sugar metabolism; 1,6-anhydro-N-acetylmuramate degradation. It participates in cell wall biogenesis; peptidoglycan recycling. Functionally, catalyzes the specific phosphorylation of 1,6-anhydro-N-acetylmuramic acid (anhMurNAc) with the simultaneous cleavage of the 1,6-anhydro ring, generating MurNAc-6-P. Is required for the utilization of anhMurNAc either imported from the medium or derived from its own cell wall murein, and thus plays a role in cell wall recycling. The protein is Anhydro-N-acetylmuramic acid kinase of Salinibacter ruber (strain DSM 13855 / M31).